The chain runs to 587 residues: MVTAAMLLQCCPVLARGPTSLLGKVVKTHQFLFGIGRCPILATQGPNCSQIHLKATKAGGDSPSWAKGHCPFMLSELQDGKSKIVQKAAPEVQEDVKAFKTDLPSSLVSVSLRKPFSGPQEQEQISGKVTHLIQNNMPGNYVFSYDQFFRDKIMEKKQDHTYRVFKTVNRWADAYPFAQHFSEASVASKDVSVWCSNDYLGMSRHPQVLQATQETLQRHGAGAGGTRNISGTSKFHVELEQELAELHQKDSALLFSSCFVANDSTLFTLAKILPGCEIYSDAGNHASMIQGIRNSGAAKFVFRHNDPDHLKKLLEKSNPKIPKIVAFETVHSMDGAICPLEELCDVSHQYGALTFVDEVHAVGLYGSRGAGIGERDGIMHKIDIISGTLGKAFGCVGGYIASTRDLVDMVRSYAAGFIFTTSLPPMVLSGALESVRLLKGEEGQALRRAHQRNVKHMRQLLMDRGLPVIPCPSHIIPIRVGNAALNSKLCDLLLSKHGIYVQAINYPTVPRGEELLRLAPSPHHSPQMMEDFVEKLLLAWTAVGLPLQDVSVAACNFCRRPVHFELMSEWERSYFGNMGPQYVTTYA.

The N-terminal 49 residues, 1 to 49 (MVTAAMLLQCCPVLARGPTSLLGKVVKTHQFLFGIGRCPILATQGPNCS), are a transit peptide targeting the mitochondrion. A succinyl-CoA-binding site is contributed by Arg163. Residues Cys258 and Phe259 each coordinate pyridoxal 5'-phosphate. Residues Ser280 and Lys299 each contribute to the succinyl-CoA site. Positions 332, 360, and 388 each coordinate pyridoxal 5'-phosphate. Residue Lys391 is part of the active site. Residue Lys391 is modified to N6-(pyridoxal phosphate)lysine. Residues Thr420 and Thr421 each coordinate pyridoxal 5'-phosphate. Thr508 contributes to the succinyl-CoA binding site.

Belongs to the class-II pyridoxal-phosphate-dependent aminotransferase family. As to quaternary structure, homodimer. Interacts with SUCLA2. Interacts with SUCLA2. Pyridoxal 5'-phosphate serves as cofactor. Erythroid-specific.

Its subcellular location is the mitochondrion inner membrane. It catalyses the reaction succinyl-CoA + glycine + H(+) = 5-aminolevulinate + CO2 + CoA. It functions in the pathway porphyrin-containing compound metabolism; protoporphyrin-IX biosynthesis; 5-aminolevulinate from glycine: step 1/1. Its activity is regulated as follows. Down-regulated by itaconyl-CoA which acts as a competitive inhibitor of succinyl-CoA substrate. In terms of biological role, catalyzes the pyridoxal 5'-phosphate (PLP)-dependent condensation of succinyl-CoA and glycine to form aminolevulinic acid (ALA), with CoA and CO2 as by-products. Contributes significantly to heme formation during erythropoiesis. Its function is as follows. Catalyzes the pyridoxal 5'-phosphate (PLP)-dependent condensation of succinyl-CoA and glycine to form aminolevulinic acid (ALA), with CoA and CO2 as by-products. Catalytic activity is 75-85% of isoform 1 activity. Catalyzes the pyridoxal 5'-phosphate (PLP)-dependent condensation of succinyl-CoA and glycine to form aminolevulinic acid (ALA), with CoA and CO2 as by-products. Catalytic activity is 65-75% of isoform 1 activity. In Homo sapiens (Human), this protein is 5-aminolevulinate synthase, erythroid-specific, mitochondrial.